A 290-amino-acid chain; its full sequence is Sodium/potassium-transporting ATPase subunit beta-2 (290 aa).

Topologically, residues methionine 1–phenylalanine 39 are cytoplasmic. A helical; Signal-anchor for type II membrane protein membrane pass occupies residues isoleucine 40–serine 67. The Extracellular portion of the chain corresponds to aspartate 68–threonine 290. Residues asparagine 96 and asparagine 118 are each glycosylated (N-linked (GlcNAc...) asparagine). The cysteines at positions 129 and 150 are disulfide-linked. Residues asparagine 153 and asparagine 159 are each glycosylated (N-linked (GlcNAc...) asparagine). Cysteines 160 and 177 form a disulfide. Asparagine 193, asparagine 197, and asparagine 238 each carry an N-linked (GlcNAc...) asparagine glycan. An immunoglobulin-like region spans residues asparagine 193–threonine 290. A disulfide bridge connects residues cysteine 200 and cysteine 261.

The protein belongs to the X(+)/potassium ATPases subunit beta family. In terms of assembly, the sodium/potassium-transporting ATPase is composed of a catalytic alpha subunit, an auxiliary non-catalytic beta subunit and an additional regulatory subunit. Interacts with BSG.

The protein localises to the cell membrane. In terms of biological role, this is the non-catalytic component of the active enzyme, which catalyzes the hydrolysis of ATP coupled with the exchange of Na(+) and K(+) ions across the plasma membrane. The exact function of the beta-2 subunit is not known. Functionally, mediates cell adhesion of neurons and astrocytes, and promotes neurite outgrowth. The protein is Sodium/potassium-transporting ATPase subunit beta-2 (ATP1B2) of Ochotona curzoniae (Black-lipped pika).